Here is a 132-residue protein sequence, read N- to C-terminus: Small ribosomal subunit protein uS8 (132 aa).

Belongs to the universal ribosomal protein uS8 family. In terms of assembly, part of the 30S ribosomal subunit. Contacts proteins S5 and S12.

One of the primary rRNA binding proteins, it binds directly to 16S rRNA central domain where it helps coordinate assembly of the platform of the 30S subunit. The protein is Small ribosomal subunit protein uS8 of Borrelia duttonii (strain Ly).